A 133-amino-acid polypeptide reads, in one-letter code: U-scoloptoxin(05)-Sa1a (133 aa).

Positions 1–24 are cleaved as a signal peptide; sequence MPSLCIIALFGTLTFYTLIPSIHT.

This sequence belongs to the scoloptoxin-05 family. In terms of processing, contains 5 disulfide bonds. Expressed by the venom gland.

It localises to the secreted. The sequence is that of U-scoloptoxin(05)-Sa1a from Scolopendra alternans (Florida Keys giant centipede).